A 318-amino-acid chain; its full sequence is Ribose-phosphate pyrophosphokinase 1 (318 aa).

Arginine 96–aspartate 101 lines the ATP pocket. Residues aspartate 128, histidine 130, aspartate 139, and aspartate 143 each contribute to the Mg(2+) site. Histidine 130 provides a ligand contact to ATP. A binding of phosphoribosylpyrophosphate region spans residues lysine 212 to glycine 227.

This sequence belongs to the ribose-phosphate pyrophosphokinase family. In terms of assembly, homodimer. The active form is probably a hexamer composed of 3 homodimers. It depends on Mg(2+) as a cofactor.

The enzyme catalyses D-ribose 5-phosphate + ATP = 5-phospho-alpha-D-ribose 1-diphosphate + AMP + H(+). It participates in metabolic intermediate biosynthesis; 5-phospho-alpha-D-ribose 1-diphosphate biosynthesis; 5-phospho-alpha-D-ribose 1-diphosphate from D-ribose 5-phosphate (route I): step 1/1. Its activity is regulated as follows. Activated by magnesium and inorganic phosphate. Its function is as follows. Catalyzes the synthesis of phosphoribosylpyrophosphate (PRPP) that is essential for nucleotide synthesis. In Macaca fascicularis (Crab-eating macaque), this protein is Ribose-phosphate pyrophosphokinase 1 (PRPS1).